A 307-amino-acid chain; its full sequence is Porphobilinogen deaminase (307 aa).

S-(dipyrrolylmethanemethyl)cysteine is present on Cys-241.

This sequence belongs to the HMBS family. Monomer. Dipyrromethane is required as a cofactor.

It carries out the reaction 4 porphobilinogen + H2O = hydroxymethylbilane + 4 NH4(+). It functions in the pathway porphyrin-containing compound metabolism; protoporphyrin-IX biosynthesis; coproporphyrinogen-III from 5-aminolevulinate: step 2/4. In terms of biological role, tetrapolymerization of the monopyrrole PBG into the hydroxymethylbilane pre-uroporphyrinogen in several discrete steps. This Macrococcus caseolyticus (strain JCSC5402) (Macrococcoides caseolyticum) protein is Porphobilinogen deaminase.